The chain runs to 235 residues: Serine protease SplA (235 aa).

Residues 1 to 35 form the signal peptide; the sequence is MNKNVMVKGLTALTILTSLGFAENISNQPHSIAKA. Active-site charge relay system residues include H74, D113, and S189.

Belongs to the peptidase S1B family.

It localises to the secreted. The protein is Serine protease SplA (splA) of Staphylococcus aureus (strain USA300).